Consider the following 236-residue polypeptide: uncharacterized protein (236 aa).

An ABC transporter domain is found at 4–225 (LLEASIEQAG…TGLEGQSLLD (222 aa)). 38–45 (GANGAGKS) contacts ATP.

This sequence belongs to the ABC transporter superfamily.

This is an uncharacterized protein from Bacillus subtilis (strain 168).